Consider the following 347-residue polypeptide: D-alanine--D-alanine ligase (347 aa).

An ATP-grasp domain is found at 131-333; it reads KRVLESAGIA…YPELIERLVD (203 aa). 161 to 216 contacts ATP; the sequence is EEKLAYPVFTKPSNMGSSVGISKSENQEELRQALKLAFRYDSRVLVEQGVNAREIE. Mg(2+) is bound by residues Asp-287, Glu-300, and Asn-302.

It belongs to the D-alanine--D-alanine ligase family. Requires Mg(2+) as cofactor. It depends on Mn(2+) as a cofactor.

It is found in the cytoplasm. It catalyses the reaction 2 D-alanine + ATP = D-alanyl-D-alanine + ADP + phosphate + H(+). It functions in the pathway cell wall biogenesis; peptidoglycan biosynthesis. Cell wall formation. This chain is D-alanine--D-alanine ligase, found in Streptococcus pneumoniae (strain JJA).